We begin with the raw amino-acid sequence, 136 residues long: MLAPKKQRFRKAHKGRVVSKAKAGTTLAFGSFGLKSIDSWRVTARQIEAGRKAATRCMKRQGRLWIRIFPDVPVSKKPAEVRMGKGKGSPEFFAVRVAPGRIMFEIAGVEENIAIRALELASTKLPVRTRIVRRYE.

It belongs to the universal ribosomal protein uL16 family. Part of the 50S ribosomal subunit.

Binds 23S rRNA and is also seen to make contacts with the A and possibly P site tRNAs. This is Large ribosomal subunit protein uL16 from Rickettsia canadensis (strain McKiel).